Reading from the N-terminus, the 381-residue chain is Putative 8-amino-7-oxononanoate synthase (381 aa).

Arg20 serves as a coordination point for substrate. Pyridoxal 5'-phosphate is bound at residue 107–108 (GY). His132 is a binding site for substrate. Pyridoxal 5'-phosphate-binding positions include Ser180, 205–208 (DEAH), and 236–239 (TLSK). Lys239 is subject to N6-(pyridoxal phosphate)lysine. Thr351 contributes to the substrate binding site.

Belongs to the class-II pyridoxal-phosphate-dependent aminotransferase family. BioF subfamily. As to quaternary structure, homodimer. Requires pyridoxal 5'-phosphate as cofactor.

It catalyses the reaction 6-carboxyhexanoyl-[ACP] + L-alanine + H(+) = (8S)-8-amino-7-oxononanoate + holo-[ACP] + CO2. It participates in cofactor biosynthesis; biotin biosynthesis. In terms of biological role, catalyzes the decarboxylative condensation of pimeloyl-[acyl-carrier protein] and L-alanine to produce 8-amino-7-oxononanoate (AON), [acyl-carrier protein], and carbon dioxide. In Rippkaea orientalis (strain PCC 8801 / RF-1) (Cyanothece sp. (strain PCC 8801)), this protein is Putative 8-amino-7-oxononanoate synthase (bioF).